The sequence spans 754 residues: Relaxin receptor 2 (754 aa).

Topologically, residues 1–416 are extracellular; sequence MIVFLVFKHL…SSFEDLLANN (416 aa). Residues 44-81 form the LDL-receptor class A domain; that stretch reads SCQKGYFPCGNLTKCLPRAFHCDGKDDCGNGADEENCG. Disulfide bonds link C45–C58, C52–C71, and C65–C80. An N-linked (GlcNAc...) asparagine glycan is attached at N54. A glycan (N-linked (GlcNAc...) asparagine) is linked at N138. LRR repeat units lie at residues 138-159, 162-183, 186-207, 210-231, 234-255, 258-279, 282-303, 306-327, 330-351, and 354-375; these read NVTL…VFIK, KLKK…AFFG, NLQI…IFKD, QLTW…LFTG, SLFF…MCAQ, QLNW…TFLS, SLTV…TFSS, NLGE…LFKD, LLQK…QFES, and QLQS…MFQP. N274 carries N-linked (GlcNAc...) asparagine glycosylation. N-linked (GlcNAc...) asparagine glycosylation is present at N335. N-linked (GlcNAc...) asparagine glycosylation is present at N378. A helical membrane pass occupies residues 417 to 437; it reads ILRIFVWVIAFITCFGNLFVI. At 438-455 the chain is on the cytoplasmic side; sequence GMRSFIKAENTTHAMSIK. Residues 456–476 traverse the membrane as a helical segment; that stretch reads ILCCADCLMGVYLFFVGIFDI. The Extracellular portion of the chain corresponds to 477 to 495; the sequence is KYRGQYQKYALLWMESVQC. Residues C495 and C573 are joined by a disulfide bond. Residues 496–518 form a helical membrane-spanning segment; sequence RLMGFLAMLSTEVSVLLLTYLTL. Residues 519–537 lie on the Cytoplasmic side of the membrane; sequence EKFLVIVFPFSNIRPGKRQ. The helical transmembrane segment at 538 to 558 threads the bilayer; the sequence is TSVILICIWMAGFLIAVIPFW. At 559–592 the chain is on the extracellular side; that stretch reads NKDYFGNFYGKNGVCFPLYYDQTEDIGSKGYSLG. A helical membrane pass occupies residues 593–613; it reads IFLGVNLLAFLIIVFSYITMF. Residues 614–639 are Cytoplasmic-facing; that stretch reads CSIQKTALQTTEVRNCFGREVAVANR. Residues 640-660 traverse the membrane as a helical segment; sequence FFFIVFSDAICWIPVFVVKIL. Residues 661 to 670 lie on the Extracellular side of the membrane; that stretch reads SLFRVEIPDT. The chain crosses the membrane as a helical span at residues 671-691; sequence MTSWIVIFFLPVNSALNPILY. Residues 692 to 754 lie on the Cytoplasmic side of the membrane; sequence TLTTNFFKDK…LGDSIMKPVS (63 aa).

It belongs to the G-protein coupled receptor 1 family. As to expression, expressed mainly in the brain, kidney, muscle, testis, thyroid, uterus, peripheral blood cells and bone marrow.

The protein resides in the cell membrane. Its function is as follows. Receptor for relaxin. The activity of this receptor is mediated by G proteins leading to stimulation of adenylate cyclase and an increase of cAMP. May also be a receptor for Leydig insulin-like peptide (INSL3). This is Relaxin receptor 2 (RXFP2) from Homo sapiens (Human).